The chain runs to 499 residues: Maturase K (499 aa).

Belongs to the intron maturase 2 family. MatK subfamily.

Its subcellular location is the plastid. It localises to the chloroplast. Its function is as follows. Usually encoded in the trnK tRNA gene intron. Probably assists in splicing its own and other chloroplast group II introns. This chain is Maturase K, found in Gleditsia triacanthos (Common honey-locust).